The chain runs to 520 residues: MVYFATSAENSKTSYKVDLSHHLSRETRARQPNPIKTIWKIAQTKVGTINMGNGDPHNTLYPISKIDFVVPSLDQPNPVQAWKEGNSKTDIISSYKDESCALSLKTAFAYGTGAGLQQVRGVLADLNNRIHSPPNHTVSLSLGNADSLTKCFRLFGDPGDSFLCEEFTFSPMTNAALPLGIKWEPIKMDKGGLIPADMDKILTNWDERTQGRRPHVLYTVPCSQNPTGSTLPFERRKSIYEIARKWDIIILEDDPYYFLQYGLNVDQFIVEQHGFTRALASVLPRSFLSMDYDGRVVRLDSFSKIVAPGMRLGWVTANNFFAEKLDSLTDSSSQHPHGFGQAFIAELLGDGGWGLDGFMKWTKSLCDEYQRRRDLFMDVFRREVGINGFATAEVPKSGMFVWIKINLEHHARYRVVKESNGDPRTNTAALMDELFRTLLDSGLVLIPASTFAITGSLSPPSGDCILDVSICIDGVGAIAELPLSIFQRVNYFRATFVGTDETICDGLKIFGRTIEQFFCF.

It belongs to the class-I pyridoxal-phosphate-dependent aminotransferase family. Pyridoxal 5'-phosphate is required as a cofactor.

It catalyses the reaction L-tyrosine + 2-oxoglutarate = 3-(4-hydroxyphenyl)pyruvate + L-glutamate. It functions in the pathway secondary metabolite biosynthesis. An L-tyrosine:2-oxoglutarate aminotransferase (probably amt1) and atromentin synthetase nps3 catalyze consecutive steps to turn over L-tyrosine into atromentin, which represents the generic precursor molecule for the entire terphenylquinone and pulvinic acid family of pigments, which are widely distributed secondary metabolites in homobasidiomycetes. The first step catalyzed by amt1 converts L-tyrosine in to 4-hydroxyphenylpyruvate (4-HPP). Adenylation of two 4-HPP monomers by the nps3 adenylation (A) domain, covalent tethering of the monomers as a thioester and oxoester onto the nps3 thiolation (T) and thioesterase (TE) domains, respectively, and symmetric C-C-bond formation between two monomers catalyzed by the nps3 TE domain leads to atromentin. Follow-up products of atromentin in S.lacrymans include atromentic acid, xerocomic acid, isoxerocomic acid and variegatic acid. In Serpula lacrymans var. lacrymans (strain S7.9) (Dry rot fungus), this protein is L-tyrosine:2-oxoglutarate aminotransferase amt1 (amt1).